Here is a 201-residue protein sequence, read N- to C-terminus: Thymidylate kinase (201 aa).

Position 7 to 14 (7 to 14 (GIDGSGKS)) interacts with ATP.

It belongs to the thymidylate kinase family.

It catalyses the reaction dTMP + ATP = dTDP + ADP. In terms of biological role, phosphorylation of dTMP to form dTDP in both de novo and salvage pathways of dTTP synthesis. This Thermosipho africanus (strain TCF52B) protein is Thymidylate kinase.